A 260-amino-acid chain; its full sequence is Zinc finger protein 575 (260 aa).

A disordered region spans residues Pro22–Pro81. Low complexity predominate over residues Pro51 to Ala64. Positions Arg67 to His78 are enriched in basic residues. C2H2-type zinc fingers lie at residues His78–His100, His106–His128, His134–His156, Tyr162–His184, Tyr192–His214, and His228–His255.

Belongs to the krueppel C2H2-type zinc-finger protein family.

Its subcellular location is the nucleus. Functionally, may be involved in transcriptional regulation. This Macaca fascicularis (Crab-eating macaque) protein is Zinc finger protein 575 (ZNF575).